Reading from the N-terminus, the 400-residue chain is Protein phosphatase methylesterase 1 (400 aa).

Residues 1 to 72 (MSDLQRTWAK…NQKLFARPQG (72 aa)) form a disordered region. A compositionally biased stretch (acidic residues) spans 19-28 (PFDEPQEEQG). A compositionally biased stretch (low complexity) spans 44-54 (SSASSASSVSS). Polar residues predominate over residues 55-64 (TGTIIPSPNQ). Residues Ser-202, Asp-228, and His-358 contribute to the active site.

The protein belongs to the AB hydrolase superfamily.

It catalyses the reaction [phosphatase 2A protein]-C-terminal L-leucine methyl ester + H2O = [phosphatase 2A protein]-C-terminal L-leucine + methanol + H(+). Functionally, demethylates proteins that have been reversibly carboxymethylated. Demethylates the phosphatase PP2A catalytic subunit. The protein is Protein phosphatase methylesterase 1 (PPE1) of Gibberella zeae (strain ATCC MYA-4620 / CBS 123657 / FGSC 9075 / NRRL 31084 / PH-1) (Wheat head blight fungus).